We begin with the raw amino-acid sequence, 807 residues long: 85/88 kDa calcium-independent phospholipase A2 (807 aa).

At Ser13 the chain carries Phosphoserine. ANK repeat units follow at residues 120-147 (WTVTHLAVELGIRECFHHSRIISCANST), 151-181 (EGCTPLHLACRKGDSEILVELVQYCHAQMDV), 185-215 (KGETAFHYAVQGDNPQVLQLLGKNASAGLNQ), 219-248 (QGLTPLHLACKMGKQEMVRVLLLCNARCNI), 251-281 (PGGFPIHTAMKFSQKGCAEMIISMDSNQIHS), 286-312 (YGASPLHWAKNAEMARMLLKRGCDVDS), 316-345 (SGNTALHVAVMRNRFDCVMVLLTYGANAGA), 349-378 (HGNTPLHLAMSKDNMEMVKALIVFGAEVDT), and 382-403 (FGETPALIASKISKLITRKALL). 2 consecutive transmembrane segments (helical) span residues 481-501 (LLCLDGGGVKGLVIIQLLIAI) and 512-532 (LFDWVAGTSTGGILALAILHS). The 185-residue stretch at 482 to 666 (LCLDGGGVKG…LANNPTLDAM (185 aa)) folds into the PNPLA domain. The short motif at 486-491 (GGGVKG) is the GXGXXG element. A GXSXG motif is present at residues 518 to 522 (GTSTG). The active-site Nucleophile is Ser520. Asp653 (proton acceptor) is an active-site residue. A DGA/G motif is present at residues 653–655 (DGG). A calmodulin-binding (1-9-14 motif) region spans residues 678 to 687 (RKGQGNKVKK). Residues 749–760 (AWCEMVGIQYFR) form a calmodulin-binding (IQ motif) region.

Homodimer formed by catalytic domains tightly interacting through a large hydrophobic interface. The contact area involves 3 alpha helices, several loops and a part of the beta sheet from each monomer. Both active sites of the dimer are in close proximity adopting an open conformation that provide sufficient space for phospholipid access and favoring cooperativity in deacylation-reacylation reactions. Each monomer has 9 ankyrin repeats stacked side-by-side in an elongated structure oriented outwards from the catalytic core. As to expression, expressed in neurons of central and peripheral nervous system. Highly expressed in Purkinje cells in cerebellum and dorsal and ventral horn neurons in the spinal cord. Expressed in testis (at protein level). Expressed in skeletal muscle (at protein level).

The protein resides in the cytoplasm. It is found in the cell membrane. It localises to the mitochondrion. Its subcellular location is the cell projection. The protein localises to the pseudopodium. It carries out the reaction a 1,2-diacyl-sn-glycero-3-phosphocholine + H2O = a 1-acyl-sn-glycero-3-phosphocholine + a fatty acid + H(+). The catalysed reaction is a 1-O-alkyl-2-acyl-sn-glycero-3-phosphocholine + H2O = a 1-O-alkyl-sn-glycero-3-phosphocholine + a fatty acid + H(+). It catalyses the reaction 1,2-dihexadecanoyl-sn-glycero-3-phosphocholine + H2O = 1-hexadecanoyl-sn-glycero-3-phosphocholine + hexadecanoate + H(+). The enzyme catalyses 1-hexadecanoyl-2-(9Z-octadecenoyl)-sn-glycero-3-phosphocholine + H2O = 1-hexadecanoyl-sn-glycero-3-phosphocholine + (9Z)-octadecenoate + H(+). It carries out the reaction 1-hexadecanoyl-2-(9Z,12Z-octadecadienoyl)-sn-glycero-3-phosphocholine + H2O = (9Z,12Z)-octadecadienoate + 1-hexadecanoyl-sn-glycero-3-phosphocholine + H(+). The catalysed reaction is 1-hexadecanoyl-2-(5Z,8Z,11Z,14Z-eicosatetraenoyl)-sn-glycero-3-phosphocholine + H2O = 1-hexadecanoyl-sn-glycero-3-phosphocholine + (5Z,8Z,11Z,14Z)-eicosatetraenoate + H(+). It catalyses the reaction 1-octadecanoyl-2-(5Z,8Z,11Z,14Z-eicosatetraenoyl)-sn-glycero-3-phosphocholine + H2O = 1-octadecanoyl-sn-glycero-3-phosphocholine + (5Z,8Z,11Z,14Z)-eicosatetraenoate + H(+). The enzyme catalyses 1-hexadecanoyl-2-(5Z,8Z,11Z,14Z-eicosatetraenoyl)-sn-glycero-3-phosphoethanolamine + H2O = 1-hexadecanoyl-sn-glycero-3-phosphoethanolamine + (5Z,8Z,11Z,14Z)-eicosatetraenoate + H(+). It carries out the reaction 1,2-dihexadecanoyl-sn-glycero-3-phosphate + H2O = 1-hexadecanoyl-sn-glycero-3-phosphate + hexadecanoate + H(+). The catalysed reaction is a 1-acyl-sn-glycero-3-phosphocholine + H2O = sn-glycerol 3-phosphocholine + a fatty acid + H(+). It catalyses the reaction 1-hexadecanoyl-sn-glycero-3-phosphocholine + H2O = sn-glycerol 3-phosphocholine + hexadecanoate + H(+). The enzyme catalyses 1-(5Z,8Z,11Z,14Z-eicosatetraenoyl)-sn-glycero-3-phosphocholine + H2O = sn-glycerol 3-phosphocholine + (5Z,8Z,11Z,14Z)-eicosatetraenoate + H(+). It carries out the reaction 2-(5Z,8Z,11Z,14Z)-eicosatetraenoyl-sn-glycero-3-phosphocholine + H2O = sn-glycerol 3-phosphocholine + (5Z,8Z,11Z,14Z)-eicosatetraenoate + H(+). The catalysed reaction is 1-O-hexadecyl-2-(5Z,8Z,11Z,14Z)-eicosatetraenoyl-sn-glycero-3-phosphocholine + H2O = 1-O-hexadecyl-sn-glycero-3-phosphocholine + (5Z,8Z,11Z,14Z)-eicosatetraenoate + H(+). It catalyses the reaction 1-O-hexadecyl-2-acetyl-sn-glycero-3-phosphocholine + H2O = 1-O-hexadecyl-sn-glycero-3-phosphocholine + acetate + H(+). The enzyme catalyses hexadecanoyl-CoA + H2O = hexadecanoate + CoA + H(+). It carries out the reaction 1',3'-bis[1,2-di-(9Z-octadecenoyl)-sn-glycero-3-phospho]-glycerol + H2O = 1'-[1,2-di-(9Z-octadecenoyl)-sn-glycero-3-phospho]-3'-[1-(9Z-octadecenoyl)-sn-glycero-3-phospho]-glycerol + (9Z)-octadecenoate + H(+). The catalysed reaction is 1'-[1,2-di-(9Z-octadecenoyl)-sn-glycero-3-phospho]-3'-[1-(9Z-octadecenoyl)-sn-glycero-3-phospho]-glycerol + H2O = 1',3'-bis-[1-(9Z-octadecenoyl)-sn-glycero-3-phospho]-glycerol + (9Z)-octadecenoate + H(+). It catalyses the reaction 1',3'-bis-[1,2-di-(9Z,12Z-octadecadienoyl)-sn-glycero-3-phospho]-glycerol + H2O = 1'-[1,2-di-(9Z,12Z-octadecadienoyl)-sn-glycero-3-phospho]-3'-[1-(9Z,12Z-octadecadienoyl)-sn-glycero-3-phospho]-glycerol + (9Z,12Z)-octadecadienoate + H(+). The enzyme catalyses 1-octadecanoyl-2-(15-hydroxy-(5Z,8Z,11Z,13E)-eicosatetraenoyl)-sn-glycero-3-phosphoethanolamine + H2O = 1-octadecanoyl-sn-glycero-3-phosphoethanolamine + 15-hydroxy-(5Z,8Z,11Z,13E)-eicosatetraenoate + H(+). With respect to regulation, inhibited by calcium-activated calmodulin. Activated by ATP. Inhibited by bromoenol lactone (BEL). Functionally, calcium-independent phospholipase involved in phospholipid remodeling with implications in cellular membrane homeostasis, mitochondrial integrity and signal transduction. Hydrolyzes the ester bond of the fatty acyl group attached at sn-1 or sn-2 position of phospholipids (phospholipase A1 and A2 activity respectively), producing lysophospholipids that are used in deacylation-reacylation cycles. Hydrolyzes both saturated and unsaturated long fatty acyl chains in various glycerophospholipid classes such as phosphatidylcholines, phosphatidylethanolamines and phosphatidates, with a preference for hydrolysis at sn-2 position. Can further hydrolyze lysophospholipids carrying saturated fatty acyl chains (lysophospholipase activity). Upon oxidative stress, contributes to remodeling of mitochondrial phospholipids in pancreatic beta cells, in a repair mechanism to reduce oxidized lipid content. Preferentially hydrolyzes oxidized polyunsaturated fatty acyl chains from cardiolipins, yielding monolysocardiolipins that can be reacylated with unoxidized fatty acyls to regenerate native cardiolipin species. Hydrolyzes oxidized glycerophosphoethanolamines present in pancreatic islets, releasing oxidized polyunsaturated fatty acids such as hydroxyeicosatetraenoates (HETEs). Has thioesterase activity toward fatty-acyl CoA releasing CoA-SH known to facilitate fatty acid transport and beta-oxidation in mitochondria particularly in skeletal muscle. Plays a role in regulation of membrane dynamics and homeostasis. Selectively hydrolyzes sn-2 arachidonoyl group in plasmalogen phospholipids, structural components of lipid rafts and myelin. Regulates F-actin polymerization at the pseudopods, which is required for both speed and directionality of MCP1/CCL2-induced monocyte chemotaxis. Targets membrane phospholipids to produce potent lipid signaling messengers. Generates lysophosphatidate (LPA, 1-acyl-glycerol-3-phosphate), which acts via G-protein receptors in various cell types. Has phospholipase A2 activity toward platelet-activating factor (PAF, 1-O-alkyl-2-acetyl-sn-glycero-3-phosphocholine), likely playing a role in inactivation of this potent pro-inflammatory signaling lipid. In response to glucose, amplifies calcium influx in pancreatic beta cells to promote INS secretion. The protein is 85/88 kDa calcium-independent phospholipase A2 (Pla2g6) of Mus musculus (Mouse).